Consider the following 205-residue polypeptide: Proteasome subunit beta type-3 (205 aa).

It belongs to the peptidase T1B family. In terms of assembly, the 26S proteasome consists of a 20S proteasome core and two 19S regulatory subunits. The 20S proteasome core is composed of 28 subunits that are arranged in four stacked rings, resulting in a barrel-shaped structure. The two end rings are each formed by seven alpha subunits, and the two central rings are each formed by seven beta subunits. The catalytic chamber with the active sites is on the inside of the barrel.

Its subcellular location is the cytoplasm. It is found in the nucleus. Functionally, non-catalytic component of the proteasome, a multicatalytic proteinase complex which is characterized by its ability to cleave peptides with Arg, Phe, Tyr, Leu, and Glu adjacent to the leaving group at neutral or slightly basic pH. The proteasome has an ATP-dependent proteolytic activity. The polypeptide is Proteasome subunit beta type-3 (Drosophila melanogaster (Fruit fly)).